Reading from the N-terminus, the 61-residue chain is Probable pancreatic secretory proteinase inhibitor (61 aa).

The Kazal-like domain occupies 6–61 (LYRKPSCGEMSAMHACPMNFAPVCGTDGNTYPNECSLCFQRQNTKTDILITKDDRC). Disulfide bonds link Cys-12–Cys-43, Cys-21–Cys-40, and Cys-29–Cys-61.

The protein resides in the secreted. This is Probable pancreatic secretory proteinase inhibitor from Anguilla anguilla (European freshwater eel).